The chain runs to 83 residues: Kunitz-type serine protease inhibitor carinatin-1 (83 aa).

The N-terminal stretch at 1 to 24 is a signal peptide; it reads MSSGGLLLLLGLLTLWEGLTPVSS. One can recognise a BPTI/Kunitz inhibitor domain in the interval 31-81; sequence CELPDDRGPCRGIFHAFYYNPDQRQCLEFIYGGCYGNANNFKTIDECERTC. Cystine bridges form between Cys31-Cys81, Cys40-Cys64, and Cys56-Cys77.

Belongs to the venom Kunitz-type family. Expressed by the venom gland.

It is found in the secreted. In terms of biological role, serine protease inhibitor. This Tropidechis carinatus (Australian rough-scaled snake) protein is Kunitz-type serine protease inhibitor carinatin-1.